The chain runs to 139 residues: UPF0216 protein MJ1224 (139 aa).

It belongs to the UPF0216 family.

The chain is UPF0216 protein MJ1224 from Methanocaldococcus jannaschii (strain ATCC 43067 / DSM 2661 / JAL-1 / JCM 10045 / NBRC 100440) (Methanococcus jannaschii).